We begin with the raw amino-acid sequence, 1123 residues long: Polyprotein of EF-Ts, chloroplastic (1123 aa).

The transit peptide at Met-1 to Ser-73 directs the protein to the chloroplast. The disordered stretch occupies residues Arg-68–Val-141. Acidic residues predominate over residues Thr-94 to Ala-103. Residues Thr-106–Ser-119 show a composition bias toward low complexity. The S1 motif 1 domain maps to Gly-143–Arg-212. Residues Thr-213–Thr-258 are disordered. Polar residues predominate over residues Gly-231–Arg-244. Positions Gln-245–Ser-254 are enriched in basic and acidic residues. One can recognise an S1 motif 2 domain in the interval Gly-263–Lys-331. Disordered regions lie at residues Lys-443 to Thr-670 and Val-894 to Lys-923. A compositionally biased stretch (polar residues) spans Glu-486–Phe-501. Residues Ser-551 to Glu-587 are compositionally biased toward low complexity. Positions Lys-630 to Ile-639 are enriched in acidic residues. Low complexity-rich tracts occupy residues Ala-657–Thr-670 and Val-894–Pro-903. A compositionally biased stretch (basic and acidic residues) spans Pro-908–Lys-923.

It belongs to the EF-Ts family. In terms of assembly, component of the chloroplast ribosome 30S and 70S subunits, as well as polysomes. Component of the chloroplast ribosome 70S subunit, and at low levels, present in polysomes. As to quaternary structure, associates transiently with chloroplast polysomes.

The protein localises to the plastid. Its subcellular location is the chloroplast. Its function is as follows. Associates with the EF-Tu.GDP complex and induces the exchange of GDP to GTP. It remains bound to the aminoacyl-tRNA.EF-Tu.GTP complex up to the GTP hydrolysis stage on the ribosome. Functionally, binds to psbD and psbA 5'-untranslated regions (UTRs) in vitro. In Oryza sativa subsp. indica (Rice), this protein is Polyprotein of EF-Ts, chloroplastic.